Reading from the N-terminus, the 539-residue chain is Copine-C (539 aa).

C2 domains lie at 1–120 (MIPS…KIVA) and 128–251 (VTGK…PLIN). The Ca(2+) site is built by leucine 23, aspartate 24, aspartate 30, aspartate 83, aspartate 85, and aspartate 98. One can recognise a VWFA domain in the interval 290-507 (SLMTAIDCTG…ALAQETLKEI (218 aa)).

The protein belongs to the copine family. It depends on Ca(2+) as a cofactor.

The protein is Copine-C (cpnC) of Dictyostelium discoideum (Social amoeba).